A 95-amino-acid polypeptide reads, in one-letter code: Small ribosomal subunit protein uS19 (95 aa).

The tract at residues 73–95 (EFSPTRTYRGHGADKNAKGSKKK) is disordered.

This sequence belongs to the universal ribosomal protein uS19 family.

Protein S19 forms a complex with S13 that binds strongly to the 16S ribosomal RNA. The polypeptide is Small ribosomal subunit protein uS19 (Deinococcus geothermalis (strain DSM 11300 / CIP 105573 / AG-3a)).